Reading from the N-terminus, the 221-residue chain is GTP-binding nuclear protein Ran-B1 (221 aa).

Residues Asp-10 to Asp-174 enclose the Small GTPase Ran-type domain. Asp-21–Thr-28 contacts GTP. The tract at residues Lys-40 to Val-48 is switch-I. GTP is bound by residues Gly-71, Asn-125–Asp-128, and Ser-153–Lys-155. Residues Gly-71 to Gln-87 are switch-II.

This sequence belongs to the small GTPase superfamily. Ran family. As to quaternary structure, found in a nuclear export complex with RanGTP, exportin and pre-miRNA.

Its subcellular location is the nucleus. GTP-binding protein involved in nucleocytoplasmic transport. Required for the import of protein into the nucleus and also for RNA export. Involved in chromatin condensation and control of cell cycle. In Nicotiana tabacum (Common tobacco), this protein is GTP-binding nuclear protein Ran-B1 (RAN-B1).